A 338-amino-acid chain; its full sequence is Cytosolic sulfotransferase 16 (338 aa).

81–86 (KTGTTW) is a 3'-phosphoadenylyl sulfate binding site. His143 acts as the Proton acceptor in catalysis. Residues Arg165, Ser173, Tyr231, and 301 to 303 (RKG) contribute to the 3'-phosphoadenylyl sulfate site.

Belongs to the sulfotransferase 1 family. In terms of tissue distribution, highly expressed in roots, stems and mature leaves. Low expression in young leaves and flowers. Barely detected in siliques.

The protein localises to the cytoplasm. The enzyme catalyses (Z)-desulfoglucotropeolin + 3'-phosphoadenylyl sulfate = (Z)-glucotropeolin + adenosine 3',5'-bisphosphate + H(+). It catalyses the reaction (Z)-indolylmethyl desulfoglucosinolate + 3'-phosphoadenylyl sulfate = (Z)-glucobrassicin + adenosine 3',5'-bisphosphate + H(+). Inhibited by phosphoadenosine 5'-phosphate (PAP). In terms of biological role, sulfotransferase that utilizes 3'-phospho-5'-adenylyl sulfate (PAPS) as sulfonate donor to catalyze the sulfate conjugation of desulfo-glucosinolates (dsGSs), the final step in the biosynthesis of the glucosinolate core structure. Substrate preference is desulfo-2-phenylethyl glucosinolate &gt; desulfo-indol-3-yl methyl glucosinolate &gt; desulfo-benzyl glucosinolate &gt; desulfo-6-methylthiohexyl glucosinolate &gt; desulfo-4-methylthiobutyl glucosinolate &gt; desulfo-3-methylthiopropyl glucosinolate &gt; desulfo-singrin &gt; desulfo-3-butenyl glucosinolate. The polypeptide is Cytosolic sulfotransferase 16 (SOT16) (Arabidopsis thaliana (Mouse-ear cress)).